Here is a 263-residue protein sequence, read N- to C-terminus: S-methyl-5'-thioadenosine phosphorylase (263 aa).

Residues Thr-13, 55–56 (RH), and 88–89 (SA) contribute to the phosphate site. Residue Met-186 participates in substrate binding. Phosphate is bound at residue Thr-187. Residue 210–212 (DYD) coordinates substrate.

It belongs to the PNP/MTAP phosphorylase family. MTAP subfamily. Homohexamer. Dimer of a homotrimer.

It carries out the reaction S-methyl-5'-thioadenosine + phosphate = 5-(methylsulfanyl)-alpha-D-ribose 1-phosphate + adenine. It functions in the pathway amino-acid biosynthesis; L-methionine biosynthesis via salvage pathway; S-methyl-5-thio-alpha-D-ribose 1-phosphate from S-methyl-5'-thioadenosine (phosphorylase route): step 1/1. Its function is as follows. Catalyzes the reversible phosphorylation of S-methyl-5'-thioadenosine (MTA) to adenine and 5-methylthioribose-1-phosphate. Involved in the breakdown of MTA, a major by-product of polyamine biosynthesis. Responsible for the first step in the methionine salvage pathway after MTA has been generated from S-adenosylmethionine. Has broad substrate specificity with 6-aminopurine nucleosides as preferred substrates. This Nitrosopumilus maritimus (strain SCM1) protein is S-methyl-5'-thioadenosine phosphorylase.